The following is a 146-amino-acid chain: 3-dehydroquinate dehydratase (146 aa).

Catalysis depends on Tyr-22, which acts as the Proton acceptor. 3 residues coordinate substrate: Asn-73, His-79, and Asp-86. His-99 functions as the Proton donor in the catalytic mechanism. Substrate-binding positions include 100 to 101 and Arg-110; that span reads IS.

The protein belongs to the type-II 3-dehydroquinase family. Homododecamer.

It carries out the reaction 3-dehydroquinate = 3-dehydroshikimate + H2O. It participates in metabolic intermediate biosynthesis; chorismate biosynthesis; chorismate from D-erythrose 4-phosphate and phosphoenolpyruvate: step 3/7. Its function is as follows. Catalyzes a trans-dehydration via an enolate intermediate. This Prochlorococcus marinus (strain MIT 9515) protein is 3-dehydroquinate dehydratase.